A 204-amino-acid polypeptide reads, in one-letter code: Cytochrome P450 monooxygenase PC-23 (204 aa).

Cys138 is a heme binding site.

It belongs to the cytochrome P450 family. The cofactor is heme.

The protein operates within secondary metabolite biosynthesis. In terms of biological role, cytochrome P450 monooxygenase; part of the gene cluster that mediates the biosynthesis of the indole diterpenes penitrems. The geranylgeranyl diphosphate (GGPP) synthase penG catalyzes the first step in penitrem biosynthesis via conversion of farnesyl pyrophosphate and isopentyl pyrophosphate into geranylgeranyl pyrophosphate (GGPP). Condensation of indole-3-glycerol phosphate with GGPP by the prenyl transferase penC then forms 3-geranylgeranylindole (3-GGI). Epoxidation by the FAD-dependent monooxygenase penM leads to a epoxidized-GGI that is substrate of the terpene cyclase penB for cyclization to yield paspaline. Paspaline is subsequently converted to 13-desoxypaxilline by the cytochrome P450 monooxygenase penP, the latter being then converted to paxilline by the cytochrome P450 monooxygenase penQ. Paxilline is converted to beta-paxitriol via C-10 ketoreduction by the short-chain dehydrogenase PC-15 which can be monoprenylated at the C-20 by the indole diterpene prenyltransferase penD. A two-step elimination (acetylation and elimination) process performed by the O-acetyltransferase PC-16 and the P.simplicissimum ptmI-ortholog not yet identified in P.crustosum, leads to the production of the prenylated form of penijanthine. The FAD-linked oxidoreductase ptmO then converts the prenylated form of penijanthine into PC-M5 which is in turn transformed into PC-M4 by the aromatic dimethylallyltransferase PC-22. A series of oxidation steps involving 4 cytochrome P450 monooxygenases (PC-21, PC-05, PC-23, PC-20) and a FAD-dependent monooxygenase (PC-14) are required for the transformation of PC-M4 to penitrems A and E. Synthesis of these final products is proposed to proceed via penitrems D and C (PC-21, PC-05, PC-14) and penitrems B and F (PC-21, PC-05, PC-14, PC-23). This chain is Cytochrome P450 monooxygenase PC-23, found in Penicillium crustosum (Blue mold fungus).